The chain runs to 1556 residues: Ubiquitin carboxyl-terminal hydrolase 47 (1556 aa).

A disordered region spans residues M117–K231. Residues A146–K156 show a composition bias toward low complexity. S172 and S173 each carry phosphoserine. Residues I180–K189 show a composition bias toward low complexity. Residues G191–P200 show a composition bias toward basic and acidic residues. The segment covering T208 to S219 has biased composition (polar residues). Position 238 is a phosphoserine (S238). Residues V396 to V779 form the USP domain. C405 acts as the Nucleophile in catalysis. Polar residues-rich tracts occupy residues N628 to G642 and L661 to Q673. The disordered stretch occupies residues N628–Q697. Residues S688 to Q697 show a composition bias toward low complexity. H720 (proton acceptor) is an active-site residue. The interval E1087–S1148 is disordered. A compositionally biased stretch (basic and acidic residues) spans D1109–G1125. Residues S1128–S1141 are compositionally biased toward low complexity. Phosphoserine is present on residues S1131, S1132, S1140, S1141, S1199, S1201, and S1205.

It belongs to the peptidase C19 family. As to quaternary structure, interacts with ttk.

The protein localises to the nucleus. It catalyses the reaction Thiol-dependent hydrolysis of ester, thioester, amide, peptide and isopeptide bonds formed by the C-terminal Gly of ubiquitin (a 76-residue protein attached to proteins as an intracellular targeting signal).. In terms of biological role, ubiquitin-specific protease that deubiquitinates target proteins to regulate different cellular and developmental pathways. Functions downstream of Dsor1/MEK to positively regulate the Ras/MAPK signaling pathway. Likely to modulate the pathway during various cellular and developmental processes including rl/MAPK activation by the receptors InR, Egfr and sevenless/sev. Functions in the post-translational stabilization of rl/MAPK levels in a mechanism that is independent of rl activity and opposes the activity of the E2 enzyme Unc6 and the putative E3 ligases poe, Ufd4 and Kcmf1, which mediate the ubiquitination and proteasomal degradation of rl. During eye development it may also act downstream of rl/MAPK to negatively regulate the Ras/MAPK signaling pathway by stabilizing the transcriptional repressor ttk and consequently inhibiting photoreceptor cell development. This suggests that at least during eye development, it may act in both the positive and negative regulation of the Ras/MAPK signaling pathway to mediate the development of different cell types. Positively regulates border follicle cell migration during oogenesis by mediating the deubiquitination and stabilization of slbo. In the wing disks it positively regulates wg signaling by stabilizing arm. Has an effect on position-effect variegation. In Drosophila melanogaster (Fruit fly), this protein is Ubiquitin carboxyl-terminal hydrolase 47.